The sequence spans 448 residues: Chromosomal replication initiator protein DnaA (448 aa).

Residues 1–85 form a domain I, interacts with DnaA modulators region; sequence MHDNLPQIWE…EVHIVVPSEE (85 aa). Residues 85–110 form a domain II region; it reads ERVGDTQNINARRSNAQSPIMGNSPL. Residues 111 to 327 are domain III, AAA+ region; that stretch reads ILNPKYTFDT…GALIRIVAYS (217 aa). 4 residues coordinate ATP: G155, G157, K158, and T159. The domain IV, binds dsDNA stretch occupies residues 328–448; sequence SLTNSEVTVE…DAIIKELKSD (121 aa).

The protein belongs to the DnaA family. As to quaternary structure, oligomerizes as a right-handed, spiral filament on DNA at oriC.

The protein resides in the cytoplasm. In terms of biological role, plays an essential role in the initiation and regulation of chromosomal replication. ATP-DnaA binds to the origin of replication (oriC) to initiate formation of the DNA replication initiation complex once per cell cycle. Binds the DnaA box (a 9 base pair repeat at the origin) and separates the double-stranded (ds)DNA. Forms a right-handed helical filament on oriC DNA; dsDNA binds to the exterior of the filament while single-stranded (ss)DNA is stabiized in the filament's interior. The ATP-DnaA-oriC complex binds and stabilizes one strand of the AT-rich DNA unwinding element (DUE), permitting loading of DNA polymerase. After initiation quickly degrades to an ADP-DnaA complex that is not apt for DNA replication. Binds acidic phospholipids. This is Chromosomal replication initiator protein DnaA from Alkaliphilus metalliredigens (strain QYMF).